The sequence spans 387 residues: Structural protein ORF387 (387 aa).

Residues 315–387 are a coiled coil; sequence KTFQEMVKVA…EEKNNTVKLS (73 aa). Residues 365–387 are disordered; it reads LTEEQQQQNETEEEEKNNTVKLS.

It localises to the virion. This chain is Structural protein ORF387, found in Acidianus convivator (ATV).